The chain runs to 208 residues: Heart- and neural crest derivatives-expressed protein 2 (208 aa).

2 disordered regions span residues 79-106 (AGAV…TQSI) and 161-197 (EFKK…RTGW). Basic residues predominate over residues 88 to 103 (TVKRRPTANRKERRRT). The region spanning 90–142 (KRRPTANRKERRRTQSINSAFAELRECIPNVPADTKLSKIKTLRLATSYIAYL) is the bHLH domain. Basic and acidic residues predominate over residues 161-178 (EFKKTDAKEERRKKEMND).

Efficient DNA binding requires dimerization with another bHLH protein.

The protein resides in the nucleus. Essential for myocardial and pectoral fin differentiation, patterning and morphogenesis. This is Heart- and neural crest derivatives-expressed protein 2 (hand2) from Danio rerio (Zebrafish).